The chain runs to 535 residues: Ribonuclease Y (535 aa).

A helical membrane pass occupies residues I4 to M24. Residues T107–E145 form a disordered region. One can recognise a KH domain in the interval T225 to L285. Residues V351–A444 enclose the HD domain.

It belongs to the RNase Y family.

The protein localises to the cell membrane. Functionally, endoribonuclease that initiates mRNA decay. This Streptococcus agalactiae serotype Ia (strain ATCC 27591 / A909 / CDC SS700) protein is Ribonuclease Y.